Reading from the N-terminus, the 411-residue chain is 2,3-bisphosphoglycerate-independent phosphoglycerate mutase (411 aa).

The segment at 164-190 is disordered; that stretch reads VSSNDPKKEGVQPLTIRPGSDDPADAK.

It belongs to the BPG-independent phosphoglycerate mutase family. A-PGAM subfamily.

The enzyme catalyses (2R)-2-phosphoglycerate = (2R)-3-phosphoglycerate. Its pathway is carbohydrate degradation; glycolysis; pyruvate from D-glyceraldehyde 3-phosphate: step 3/5. Functionally, catalyzes the interconversion of 2-phosphoglycerate and 3-phosphoglycerate. The protein is 2,3-bisphosphoglycerate-independent phosphoglycerate mutase of Methanoculleus marisnigri (strain ATCC 35101 / DSM 1498 / JR1).